The sequence spans 229 residues: Orotidine 5'-phosphate decarboxylase (229 aa).

Substrate is bound by residues D10, K32, 59 to 68, T119, R180, Q189, G209, and R210; that span reads DLKFHDIPNT. The Proton donor role is filled by K61.

It belongs to the OMP decarboxylase family. Type 1 subfamily. In terms of assembly, homodimer.

It catalyses the reaction orotidine 5'-phosphate + H(+) = UMP + CO2. It participates in pyrimidine metabolism; UMP biosynthesis via de novo pathway; UMP from orotate: step 2/2. In terms of biological role, catalyzes the decarboxylation of orotidine 5'-monophosphate (OMP) to uridine 5'-monophosphate (UMP). The chain is Orotidine 5'-phosphate decarboxylase from Legionella pneumophila (strain Paris).